The primary structure comprises 92 residues: MARSLKKSPFVANHLLKKIEKLNMKGGKEIIVTWSRASTIIPTMIGHTIAIHNGKEHLPIYITDRMVGHKLGEFAPTLTFRGHARNDNRSRR.

Belongs to the universal ribosomal protein uS19 family.

The protein localises to the plastid. It is found in the chloroplast. In terms of biological role, protein S19 forms a complex with S13 that binds strongly to the 16S ribosomal RNA. This chain is Small ribosomal subunit protein uS19c, found in Piper cenocladum (Ant piper).